We begin with the raw amino-acid sequence, 41 residues long: Pi-stichotoxin-Hmg5c (41 aa).

3 disulfides stabilise this stretch: C4-C37, C6-C30, and C20-C38.

It belongs to the sea anemone type 3 (BDS) potassium channel toxin family.

It is found in the secreted. Its subcellular location is the nematocyst. Its function is as follows. Toxin with different activities on acid-sensing ion channels (ASIC) and nicotinic acetylcholine receptors. Is able to bind T.californica muscle-type nicotinic acetylcholine receptors (nAChR) (alpha-1-beta-1-delta-epsilon (CHRNA1-CHRNB1-CHRND-CHRNE)), and human alpha-7/CHRNA7 nicotinic acetylcholine receptors. Weakly and reversibly inhibits rat homomeric ASIC1 (isoform ASIC1a) (IC(50)=1.25 uM), while it potentiates rat homomeric ASIC3 (EC(50)=1.53 uM). Rat ASIC1a current inhibition is not complete, and reaches a maximum of 86% inhibition. On rat ASIC3, does not activate the channel itself, but produces a remarkable potentiation of the transient current resulting from the acidic pulse. At the maximal applied concentration, elicits responses that are twice as high as those produced by extracellular protons. Surprisingly, shows a different activity on human ASIC3. On the truncated human ASIC3 (ASIC3-D20), the toxin weakly inhibits the channel. Molecular modeling interaction with rat ASIC1a suggests that it hinders the collapse of acidic pockets and stabilizes nonconducting channels state. In vivo, causes an anxiolytic effect on mouse behavior. Also shows an analgesic activity in an acid-induced muscle pain model, and important anti-inflammatory effect in models of acute local inflammation. This is Pi-stichotoxin-Hmg5c from Heteractis magnifica (Magnificent sea anemone).